The following is a 332-amino-acid chain: Ubiquinone biosynthesis protein COQ4, mitochondrial (332 aa).

The transit peptide at 1 to 16 (MFTVSKKSLQASRNAF) directs the protein to the mitochondrion. Residues His212, Asp213, His216, and Glu228 each coordinate Zn(2+).

It belongs to the COQ4 family. Component of a multi-subunit COQ enzyme complex, composed of at least COQ3, COQ4, COQ5, COQ6, COQ7 and COQ9. Zn(2+) is required as a cofactor.

It is found in the mitochondrion inner membrane. It catalyses the reaction a 4-hydroxy-3-methoxy-5-(all-trans-polyprenyl)benzoate + H(+) = a 2-methoxy-6-(all-trans-polyprenyl)phenol + CO2. It functions in the pathway cofactor biosynthesis; ubiquinone biosynthesis. Its function is as follows. Lyase that catalyzes the C1-decarboxylation of 4-hydroxy-3-methoxy-5-(all-trans-polyprenyl)benzoic acid into 2-methoxy-6-(all-trans-polyprenyl)phenol during ubiquinone biosynthesis. The polypeptide is Ubiquinone biosynthesis protein COQ4, mitochondrial (Kluyveromyces lactis (strain ATCC 8585 / CBS 2359 / DSM 70799 / NBRC 1267 / NRRL Y-1140 / WM37) (Yeast)).